Consider the following 320-residue polypeptide: Zinc transporter ZitB (320 aa).

6 helical membrane passes run 16 to 36, 43 to 63, 85 to 105, 117 to 137, 153 to 173, and 180 to 200; these read LLAA…GGLL, LADA…LVAV, AAFV…WEAI, VPML…FWLL, LHVL…IIIL, and IDPI…WALL.

This sequence belongs to the cation diffusion facilitator (CDF) transporter (TC 2.A.4) family. SLC30A subfamily.

It is found in the cell inner membrane. In terms of biological role, involved in zinc efflux across the cytoplasmic membrane, thus reducing zinc accumulation in the cytoplasm and rendering bacteria more resistant to zinc. It may contribute to zinc homeostasis at low concentrations of zinc. This chain is Zinc transporter ZitB, found in Pectobacterium atrosepticum (strain SCRI 1043 / ATCC BAA-672) (Erwinia carotovora subsp. atroseptica).